The sequence spans 104 residues: Large ribosomal subunit protein uL24 (104 aa).

This sequence belongs to the universal ribosomal protein uL24 family. As to quaternary structure, part of the 50S ribosomal subunit.

Functionally, one of two assembly initiator proteins, it binds directly to the 5'-end of the 23S rRNA, where it nucleates assembly of the 50S subunit. Its function is as follows. One of the proteins that surrounds the polypeptide exit tunnel on the outside of the subunit. This chain is Large ribosomal subunit protein uL24, found in Bartonella henselae (strain ATCC 49882 / DSM 28221 / CCUG 30454 / Houston 1) (Rochalimaea henselae).